We begin with the raw amino-acid sequence, 209 residues long: MSRTMIKNDLKQTDFTEAGEPFRLFAEWLRDAEQSEPNDPNATALATVDPEGMPNVRMVLLKGFDEQGFVFYTNFESAKGQEILSSMKAAMCFHWKSLRRQVRVRGPVEKVTDEEANAYYASRPRGSRIGAWASKQSRPLEGRFALEKAVAEYTAKYAVGEIPRPDYWSGFRIKPVSIEFWHDRPFRLHDRILFERESGGLWTKTRLYP.

Residues 57–62 (RMVLLK), 72–73 (YT), Lys79, and Gln101 contribute to the FMN site. Lys62 contacts substrate. Tyr119, Arg123, and Ser127 together coordinate substrate. FMN contacts are provided by residues 136-137 (QS) and Trp181. 187–189 (RLH) contributes to the substrate binding site. Residue Arg191 coordinates FMN.

It belongs to the pyridoxamine 5'-phosphate oxidase family. As to quaternary structure, homodimer. It depends on FMN as a cofactor.

It carries out the reaction pyridoxamine 5'-phosphate + O2 + H2O = pyridoxal 5'-phosphate + H2O2 + NH4(+). The enzyme catalyses pyridoxine 5'-phosphate + O2 = pyridoxal 5'-phosphate + H2O2. The protein operates within cofactor metabolism; pyridoxal 5'-phosphate salvage; pyridoxal 5'-phosphate from pyridoxamine 5'-phosphate: step 1/1. Its pathway is cofactor metabolism; pyridoxal 5'-phosphate salvage; pyridoxal 5'-phosphate from pyridoxine 5'-phosphate: step 1/1. Functionally, catalyzes the oxidation of either pyridoxine 5'-phosphate (PNP) or pyridoxamine 5'-phosphate (PMP) into pyridoxal 5'-phosphate (PLP). This chain is Pyridoxine/pyridoxamine 5'-phosphate oxidase, found in Chelativorans sp. (strain BNC1).